Reading from the N-terminus, the 276-residue chain is Cytoskeleton protein RodZ (276 aa).

Over 1-110 (MTSMRKKTIG…SSKKKKKKTS (110 aa)) the chain is Cytoplasmic. Residues 111–131 (FLPLFYFILFALSILIFVTYY) form a helical; Signal-anchor for type II membrane protein membrane-spanning segment. Over 132 to 276 (VWNYIQTQPE…GQITVTFTKN (145 aa)) the chain is Extracellular.

Belongs to the RodZ family. In terms of assembly, interacts with MltG and MreC in the elongasome. Interacts with KhpB (also called EloR/Jag).

Its subcellular location is the cell membrane. Functionally, cytoskeletal protein that is involved in cell-shape control through regulation of the length of the long axis. Probably part of the elongasome which synthesizes peripheral peptidoglycan. This chain is Cytoskeleton protein RodZ, found in Streptococcus pneumoniae (strain ATCC BAA-255 / R6).